The chain runs to 7071 residues: Replicase polyprotein 1ab (7071 aa).

The region spanning 12–127 (THVQLSLPVL…YRNVLLRKNG (116 aa)) is the CoV Nsp1 globular domain. The BetaCoV Nsp1 C-terminal domain occupies 148-179 (ELGTDPIEDYEQNWNTKHGSGVLRELTRELNG). The CoV Nsp2 N-terminal domain occupies 183 to 456 (TRYVDNNFCG…NEDLLEILSR (274 aa)). Residues Cys-200, Cys-231, His-234, His-236, Cys-323, Cys-326, Cys-341, Cys-344, Cys-370, Cys-373, His-382, and Cys-416 each coordinate Zn(2+). The C2H2 stretch occupies residues 200–236 (CIKDLLARAGKSMCTLSEQLDYIESKRGVYCCRDHGH). The C4 stretch occupies residues 323–344 (CNHCDEVSWQTCDFLKATCEQC). A C2HC region spans residues 370 to 416 (CPACQDPEIGPEHSAADYHNHSNIETRLRKGGRTRCFGGCVFAYVGC). The CoV Nsp2 middle domain occupies 458 to 688 (RVNINIVGDF…VDVVNKALEM (231 aa)). One can recognise a CoV Nsp2 C-terminal domain in the interval 690-818 (IDQVTIAGAK…TNNVFRLKGG (129 aa)). The region spanning 822-930 (KGVTFGEDTV…MYCSFYPPDE (109 aa)) is the Ubiquitin-like 1 domain. 3 consecutive Macro domains span residues 1001–1167 (VNQL…MDYL), 1205–1333 (KIKA…LPSE), and 1341–1468 (ILGT…TSSS). One can recognise a DPUP domain in the interval 1470–1536 (TSEDHFVETV…PLDKLKSLLS (67 aa)). The Ubiquitin-like 2 domain occupies 1540–1595 (VKTIKVFTTVDNTNLHTQLVDMSMTYGQQLGPTYLEGADVTKIKPHVNHEGKTFFV). In terms of domain architecture, Peptidase C16 spans 1609–1873 (YYHTLDESFL…YTEIEPKLDG (265 aa)). The active-site For PL-PRO activity is Cys-1649. Residues Cys-1727, Cys-1730, Cys-1762, and Cys-1764 each coordinate Zn(2+). Residues 1727–1764 (CKHCGQKTTTLTGVEAVMYMGTLSYDNLKMGVSIPCVC) form a C4-type zinc finger. Active-site for PL-PRO activity residues include His-1810 and Asp-1824. The region spanning 1886 to 1996 (PIDLIPTQPL…CLWSTKPVDT (111 aa)) is the Nucleic acid-binding domain. Positions 2021-2130 (PTPEEVVENP…LGQAAVTTSN (110 aa)) constitute a G2M domain. A helical membrane pass occupies residues 2201-2221 (LFTIAMWLLLLSICLGSLIYV). An HD1 region spans residues 2201-2369 (LFTIAMWLLL…IFFASFYYIW (169 aa)). The 3Ecto domain maps to 2222-2292 (TAALGVLLSN…QVTISSYKLD (71 aa)). 2 disulfide bridges follow: Cys-2238/Cys-2266 and Cys-2257/Cys-2263. Transmembrane regions (helical) follow at residues 2312-2334 (FFYLLGLSAIMQVFFGYFASHFI) and 2349-2369 (MAPVSAMVRMYIFFASFYYIW). The segment at 2370 to 2460 (KSYVHIMDGC…QFKRPINPTD (91 aa)) is Y1. One can recognise a CoV Nsp3 Y domain in the interval 2370–2738 (KSYVHIMDGC…ITTKISLKGG (369 aa)). Residues His-2374, Cys-2379, Cys-2384, Cys-2387, Cys-2420, His-2423, Cys-2427, and Cys-2430 each coordinate Zn(2+). The ZF1 stretch occupies residues 2374-2387 (HIMDGCTSSTCMMC). The tract at residues 2420-2430 (CKTHNWNCLNC) is ZF2. Positions 2461-2555 (QSSYVVDSVA…LLDQALVSDV (95 aa)) are Y2. The coV-Y stretch occupies residues 2461–2738 (QSSYVVDSVA…ITTKISLKGG (278 aa)). The interval 2556–2637 (GDSTEVSVKM…ECLKLSHHSD (82 aa)) is Y3. The tract at residues 2638-2738 (LEVTGDSCNN…ITTKISLKGG (101 aa)) is Y4. 6 consecutive transmembrane segments (helical) span residues 2753 to 2773 (LLCVLAALVCYIVMPVHILSV), 3020 to 3040 (ASVVAGGIIAILVTCAAYYFM), 3059 to 3079 (LFLMSFTILCLAPAYSFLPGV), 3081 to 3101 (SVFYLYLTFYFTNDVSFLAHL), 3103 to 3123 (WFAMFSPIVPFWITAIYVFCI), and 3140 to 3160 (VVFNGVTFSTFEEAALCTFLL). Residues 2753–3160 (LLCVLAALVC…EEAALCTFLL (408 aa)) form an HD2 region. Residues 3140–3238 (VVFNGVTFST…QTSITSAVLQ (99 aa)) form the Nsp4C domain. The Peptidase C30 domain occupies 3239-3544 (SGFRKMAFPS…VRQCSGVTFQ (306 aa)). Residues His-3279 and Cys-3383 each act as for 3CL-PRO activity in the active site. 7 helical membrane-spanning segments follow: residues 3562–3582 (FLTSLLILVQSTQWSLFFFVY), 3584–3604 (NAFLPFTLGIMAVAACAMLLV), 3610–3630 (FLCLFLLPSLATVAYFNMVYM), 3657–3676 (CVMYASALVLLVLMTARTVY), 3683–3702 (VWTLMNVITLVYKVYYGNAL), 3726–3746 (IMFLARAIVFVCVEYYPLLFI), and 3754–3774 (IMLVYCFLGYCCCCYFGLFCL). The tract at residues 3562-3774 (FLTSLLILVQ…CCCYFGLFCL (213 aa)) is HD3. The RdRp Nsp7 cofactor domain maps to 3835–3917 (SKMSDVKCTS…EMLDNRATLQ (83 aa)). A RdRp Nsp8 cofactor domain is found at 3918 to 4115 (AIASEFSSLP…LRANSAVKLQ (198 aa)). Residues 4116–4228 (NNELSPVALR…GSLAATVRLQ (113 aa)) form the Nsp9 ssRNA-binding domain. The 139-residue stretch at 4229–4367 (AGNATEVPAN…CDQLREPMMQ (139 aa)) folds into the ExoN/MTase coactivator domain. 8 residues coordinate Zn(2+): Cys-4302, Cys-4305, His-4311, Cys-4318, Cys-4345, Cys-4348, Cys-4356, and Cys-4358. Zinc fingers lie at residues 4302–4318 (CLYCRCHIDHPNPKGFC) and 4345–4358 (CTVCGMWKGYGCSC). Positions 4374–4628 (FLNRVCGVSA…AAESHMDADL (255 aa)) constitute a NiRAN domain. Residues Asn-4576 and Asp-4585 each coordinate Mn(2+). A Nsp12 Interface domain is found at 4633 to 4731 (IKWDLLKYDF…HNQDVNLHSS (99 aa)). Residues His-4662, Cys-4668, Cys-4673, Cys-4677, and Cys-4854 each coordinate Zn(2+). In terms of domain architecture, Nsp12 RNA-dependent RNA polymerase spans 4732–5299 (RLSFKELLVY…AMYTPHTVLQ (568 aa)). Residues 4734–4948 (SFKELLVYAA…HQKLLKSIAA (215 aa)) form a rdRp Fingers N-ter region. A rdRp Palm N-ter region spans residues 4949 to 4987 (TRGATVVIGTSKFYGGWHNMLKTVYSDVETPHLMGWDYP). The region spanning 4979 to 5141 (PHLMGWDYPK…CYNSNYAAQG (163 aa)) is the RdRp catalytic domain. A rdRp Fingers C-ter region spans residues 4988 to 5046 (KCDRAMPNMLRIMASLVLARKHSTCCNLSHRFYRLANECAQVLSEMVMCGGSLYVKPGG). Residues His-5009, Cys-5012, and Cys-5013 each contribute to the Zn(2+) site. The segment at 5047–5182 (TSSGDATTAY…TKGPHEFCSQ (136 aa)) is rdRp Palm C-ter. Residues Ser-5126, Asp-5127, and Asp-5128 contribute to the active site. Residues 5183 to 5299 (HTMLVKQGDD…AMYTPHTVLQ (117 aa)) form a rdRp Thumb region. In terms of domain architecture, CV ZBD spans 5300–5412 (AVGACVLCNS…TDFNAIATCD (113 aa)). Positions 5304, 5307, 5315, 5318, 5325, 5328, 5332, 5338, 5349, 5354, 5371, and 5374 each coordinate Zn(2+). One can recognise a (+)RNA virus helicase ATP-binding domain in the interval 5556-5737 (NISDEFSSNV…MKTIGPDMFL (182 aa)). 5581-5588 (GPPGTGKS) lines the ATP pocket. In terms of domain architecture, (+)RNA virus helicase C-terminal spans 5738–5907 (GTCRRCPAEI…TLQAENVTGL (170 aa)). Positions 5972–6187 (MFITREEAIR…RCLAVHECFV (216 aa)) constitute an ExoN domain. Residues Asp-5990, Glu-5992, and Glu-6091 contribute to the active site. Residues Cys-6107, Cys-6110, Cys-6126, His-6129, His-6157, Cys-6161, and His-6164 each contribute to the Zn(2+) site. Active-site residues include His-6168 and Asp-6173. Cys-6179 lines the Zn(2+) pocket. The N7-MTase domain occupies 6196–6427 (YPIIGDELKI…NLWNTFTRLQ (232 aa)). Residue 6231-6237 (DIGNPKA) coordinates S-adenosyl-L-methionine. The interval 6314–6328 (CDGGSLYVNKHAFHT) is gpppA-binding. Zn(2+)-binding residues include Cys-6352, Cys-6373, Cys-6384, and His-6387. Residues 6428 to 6488 (SLENVAYNVV…NVAFELWAKR (61 aa)) enclose the Nsp15 N-terminal oligomerization domain. One can recognise an AV-Nsp11N/CoV-Nsp15M domain in the interval 6489–6614 (NIKSVPEIKI…YFKKVDGIIQ (126 aa)). Residues 6631–6770 (KPRSQMETDF…KDGHVETFYP (140 aa)) form the NendoU domain. Catalysis depends on residues His-6661, His-6676, Lys-6716, Lys-6819, Asp-6903, Lys-6943, and Glu-6976. The Nidovirus-type SAM-dependent 2'-O-MTase domain occupies 6775 to 7069 (SQAWQPGVAM…RVVVSSDILV (295 aa)).

The protein belongs to the coronaviruses polyprotein 1ab family. Interacts with host PHB and PHB2. As to quaternary structure, interacts with papain-like protease nsp3 and non-structural protein 6. In terms of assembly, monomer. Homodimer. Only the homodimer shows catalytic activity. Interacts with nsp8 and nsp12 to form the replication-transcription complex (RTC): nsp12, nsp7, two subunits of nsp8, and up to two subunits of nsp13. As to quaternary structure, interacts with nsp7, nsp13 and nsp12 to form the replication-transcription complex (RTC): nsp12, nsp7, two subunits of nsp8, and up to two subunits of nsp13. In terms of assembly, interacts with nsp12. Interacts with proofreading exoribonuclease nsp14 and 2'-O-methyltransferase nsp16; these interactions enhance nsp14 and nsp16 enzymatic activities. As to quaternary structure, interacts with nsp7 and nsp8 to form the replication-transcription complex (RTC): nsp12, nsp7, two subunits of nsp8, and up to two subunits of nsp13. Interacts with nsp9. In terms of assembly, interacts with nsp8 to form the replication-transcription complex (RTC): nsp12, nsp7, two subunits of nsp8, and up to two subunits of nsp13. It depends on Mn(2+) as a cofactor. The cofactor is Mg(2+). Specific enzymatic cleavages in vivo by its own proteases yield mature proteins. 3CL-PRO and PL-PRO proteinases are autocatalytically processed.

The protein resides in the host membrane. It is found in the host cytoplasm. The protein localises to the host perinuclear region. It localises to the host endoplasmic reticulum-Golgi intermediate compartment. The enzyme catalyses RNA(n) + a ribonucleoside 5'-triphosphate = RNA(n+1) + diphosphate. The catalysed reaction is ATP + H2O = ADP + phosphate + H(+). It carries out the reaction Thiol-dependent hydrolysis of ester, thioester, amide, peptide and isopeptide bonds formed by the C-terminal Gly of ubiquitin (a 76-residue protein attached to proteins as an intracellular targeting signal).. It catalyses the reaction a 5'-end (N(7)-methyl 5'-triphosphoguanosine)-ribonucleoside in mRNA + S-adenosyl-L-methionine = a 5'-end (N(7)-methyl 5'-triphosphoguanosine)-(2'-O-methyl-ribonucleoside) in mRNA + S-adenosyl-L-homocysteine + H(+). The enzyme catalyses uridylyl-uridylyl-ribonucleotide-RNA = a 3'-end uridylyl-2',3'-cyclophospho-uridine-RNA + a 5'-end dephospho-ribonucleoside-RNA. The catalysed reaction is a 5'-end diphospho-ribonucleoside in mRNA + GTP + H(+) = a 5'-end (5'-triphosphoguanosine)-ribonucleoside in mRNA + diphosphate. It carries out the reaction a 5'-end (5'-triphosphoguanosine)-ribonucleoside in mRNA + S-adenosyl-L-methionine = a 5'-end (N(7)-methyl 5'-triphosphoguanosine)-ribonucleoside in mRNA + S-adenosyl-L-homocysteine. In terms of biological role, the replicase polyprotein of coronaviruses is a multifunctional protein: it contains the activities necessary for the transcription of negative stranded RNA, leader RNA, subgenomic mRNAs and progeny virion RNA as well as proteinases responsible for the cleavage of the polyprotein into functional products. Functionally, inhibits host translation by interacting with the 40S ribosomal subunit. The nsp1-40S ribosome complex further induces an endonucleolytic cleavage near the 5'UTR of host mRNAs, targeting them for degradation. Viral mRNAs are not susceptible to nsp1-mediated endonucleolytic RNA cleavage thanks to the presence of a 5'-end leader sequence and are therefore protected from degradation. By suppressing host gene expression, nsp1 facilitates efficient viral gene expression in infected cells and evasion from host immune response. May play a role in the modulation of host cell survival signaling pathway by interacting with host PHB and PHB2. Indeed, these two proteins play a role in maintaining the functional integrity of the mitochondria and protecting cells from various stresses. Its function is as follows. Responsible for the cleavages located at the N-terminus of the replicase polyprotein. In addition, PL-PRO possesses a deubiquitinating/deISGylating activity and processes both 'Lys-48'- and 'Lys-63'-linked polyubiquitin chains from cellular substrates. Participates together with nsp4 in the assembly of virally-induced cytoplasmic double-membrane vesicles necessary for viral replication. Antagonizes innate immune induction of type I interferon by blocking the phosphorylation, dimerization and subsequent nuclear translocation of host IRF3. Also prevents host NF-kappa-B signaling. In terms of biological role, participates in the assembly of virally-induced cytoplasmic double-membrane vesicles necessary for viral replication. Functionally, cleaves the C-terminus of replicase polyprotein at 11 sites. Recognizes substrates containing the core sequence [ILMVF]-Q-|-[SGACN]. Also able to bind an ADP-ribose-1''-phosphate (ADRP). Plays a role in the initial induction of autophagosomes from host endoplasmic reticulum. Later, limits the expansion of these phagosomes that are no longer able to deliver viral components to lysosomes. Its function is as follows. Forms a hexadecamer with nsp8 (8 subunits of each) that may participate in viral replication by acting as a primase. Alternatively, may synthesize substantially longer products than oligonucleotide primers. In terms of biological role, forms a hexadecamer with nsp7 (8 subunits of each) that may participate in viral replication by acting as a primase. Alternatively, may synthesize substantially longer products than oligonucleotide primers. Functionally, forms a primer, NSP9-pU, which is utilized by the polymerase for the initiation of RNA chains. Interacts with ribosome signal recognition particle RNA (SRP). Together with NSP8, suppress protein integration into the cell membrane, thereby disrupting host immune defenses. Plays a pivotal role in viral transcription by stimulating both nsp14 3'-5' exoribonuclease and nsp16 2'-O-methyltransferase activities. Therefore plays an essential role in viral mRNAs cap methylation. Its function is as follows. RNA-directed RNA polymerase that catalyzes the transcription of viral genomic and subgenomic RNAs. Acts in complex with nsp7 and nsp8 to transcribe both the minus and positive strands of genomic RNA. The kinase-like NiRAN domain of NSP12 attaches one or more nucleotides to the amino terminus of NSP9, forming a covalent RNA-protein intermediate that serves as transcription/replication primer. Subgenomic RNAs (sgRNAs) are formed by discontinuous transcription: The polymerase has the ability to pause at transcription-regulating sequences (TRS) and jump to the leader TRS, resulting in a major deletion. This creates a series of subgenomic RNAs that are replicated, transcribed and translated. In addition, Nsp12 is a subunit of the viral RNA capping enzyme that catalyzes the RNA guanylyltransferase reaction for genomic and sub-genomic RNAs. Subsequently, the NiRAN domain transfers RNA to GDP, and forms the core cap structure GpppA-RNA. In terms of biological role, multi-functional protein with a zinc-binding domain in N-terminus displaying RNA and DNA duplex-unwinding activities with 5' to 3' polarity. Activity of helicase is dependent on magnesium. Functionally, plays a role in viral RNA synthesis through two distinct activities. The N7-guanine methyltransferase activity plays a role in the formation of the cap structure GpppA-RNA. The proofreading exoribonuclease reduces the sensitivity of the virus to RNA mutagens during replication. This activity acts on both ssRNA and dsRNA in a 3'-5' direction. Plays a role in viral transcription/replication and prevents the simultaneous activation of host cell dsRNA sensors, such as MDA5/IFIH1, OAS, and PKR. Acts by degrading the 5'-polyuridines generated during replication of the poly(A) region of viral genomic and subgenomic RNAs. Catalyzes a two-step reaction in which a 2'3'-cyclic phosphate (2'3'-cP) is first generated by 2'-O transesterification, which is then hydrolyzed to a 3'-phosphate (3'-P). If not degraded, poly(U) RNA would hybridize with poly(A) RNA tails and activate host dsRNA sensors. Its function is as follows. Methyltransferase that mediates mRNA cap 2'-O-ribose methylation to the 5'-cap structure of viral mRNAs. N7-methyl guanosine cap is a prerequisite for binding of nsp16. Therefore plays an essential role in viral mRNAs cap methylation which is essential to evade immune system. The sequence is that of Replicase polyprotein 1ab (rep) from Rhinolophus ferrumequinum (Greater horseshoe bat).